Consider the following 2359-residue polypeptide: Nonribosomal peptide synthetase anaPS (2359 aa).

An adenylation 1 region spans residues 239–633; it reads RNATVHGDTL…VRRKDNQVKI (395 aa). The 77-residue stretch at 770–846 folds into the Carrier 1 domain; it reads AAQGKGEEAI…ELASAANLSN (77 aa). The residue at position 807 (serine 807) is an O-(pantetheine 4'-phosphoryl)serine. A condensation 1 region spans residues 883–1292; the sequence is EDIYPSTALQ…VGDLPRMSRQ (410 aa). The tract at residues 1321–1709 is adenylation 2; sequence LEYPNACAVS…GRKDSQIKIR (389 aa). Residues 1842 to 1918 enclose the Carrier 2 domain; it reads APSNSVEQDL…AIANKIGVVS (77 aa). Serine 1879 carries the O-(pantetheine 4'-phosphoryl)serine modification. Residues 1936–2356 are condensation 2; sequence LTPIQEFFFE…LVKCLEDLAS (421 aa).

The protein belongs to the NRP synthetase family.

The catalysed reaction is anthranilate + L-tryptophan + 2 ATP = (R)-benzodiazepinedione + 2 AMP + 2 diphosphate + H(+). Its pathway is alkaloid biosynthesis. Its function is as follows. Nonribosomal peptide synthetase; part of the gene cluster that mediates the biosynthesis of the prenylated pyrroloindoline diketopiperazine acetylaszonalenin. The first step in the pathway is the formation of (R)-benzodiazepinedione by condensation of tryptophan and anthranilic acid catalyzed by the non-ribosomal peptide synthetase anaPS. The prenyltransferase anaPT then converts (R)-benzodiazepinedione to aszonalenin in the presence of dimethylallyl diphosphate (DMAPP) via C3-prenylation. The last step in the biosynthesis of acetylaszonalenin via acetylation of aszonalenin at position N1 catalyzed by anaAT. The polypeptide is Nonribosomal peptide synthetase anaPS (Neosartorya fischeri (strain ATCC 1020 / DSM 3700 / CBS 544.65 / FGSC A1164 / JCM 1740 / NRRL 181 / WB 181) (Aspergillus fischerianus)).